We begin with the raw amino-acid sequence, 451 residues long: Phosphoglucosamine mutase (451 aa).

Residue Ser104 is the Phosphoserine intermediate of the active site. Ser104, Asp249, Asp251, and Asp253 together coordinate Mg(2+). Ser104 is subject to Phosphoserine.

Belongs to the phosphohexose mutase family. It depends on Mg(2+) as a cofactor. In terms of processing, activated by phosphorylation.

The catalysed reaction is alpha-D-glucosamine 1-phosphate = D-glucosamine 6-phosphate. Its function is as follows. Catalyzes the conversion of glucosamine-6-phosphate to glucosamine-1-phosphate. This Psychrobacter sp. (strain PRwf-1) protein is Phosphoglucosamine mutase.